Consider the following 312-residue polypeptide: GATA zinc finger domain-containing protein 20 (312 aa).

2 disordered regions span residues 1–45 and 213–232; these read MGKR…PQQP and TIGSSATTGDTTAIDGTNTN. Positions 29 to 45 are enriched in low complexity; sequence QQQQQQQEQQPQQPQQP. The GATA-type zinc-finger motif lies at 260 to 287; the sequence is CYVCGVTETPYWRRGTDEGVMVDLCNAC.

The chain is GATA zinc finger domain-containing protein 20 (gtaT) from Dictyostelium discoideum (Social amoeba).